A 439-amino-acid chain; its full sequence is Serine/threonine-protein kinase 2 (439 aa).

Positions 87 to 439 constitute a Protein kinase domain; it reads NDDFYHISTG…IFSDWINGRN (353 aa). Residues 93–101 and lysine 117 contribute to the ATP site; that span reads ISTGGYGIV. Residue aspartate 307 is the Proton acceptor of the active site.

Belongs to the protein kinase superfamily. Ser/Thr protein kinase family. Poxviruses subfamily. Phosphorylated in vivo. Autophosphorylated in vitro.

The protein resides in the host endoplasmic reticulum. It is found in the host endoplasmic reticulum-Golgi intermediate compartment. It carries out the reaction L-seryl-[protein] + ATP = O-phospho-L-seryl-[protein] + ADP + H(+). The catalysed reaction is L-threonyl-[protein] + ATP = O-phospho-L-threonyl-[protein] + ADP + H(+). Essential serine-protein kinase involved in the early stage of virion morphogenesis. The chain is Serine/threonine-protein kinase 2 (OPG054) from Homo sapiens (Human).